The sequence spans 293 residues: 33 kDa chaperonin (293 aa).

2 disulfide bridges follow: Cys-237–Cys-239 and Cys-271–Cys-274.

The protein belongs to the HSP33 family. In terms of processing, under oxidizing conditions two disulfide bonds are formed involving the reactive cysteines. Under reducing conditions zinc is bound to the reactive cysteines and the protein is inactive.

The protein localises to the cytoplasm. Functionally, redox regulated molecular chaperone. Protects both thermally unfolding and oxidatively damaged proteins from irreversible aggregation. Plays an important role in the bacterial defense system toward oxidative stress. The protein is 33 kDa chaperonin of Haemophilus influenzae (strain PittGG).